We begin with the raw amino-acid sequence, 440 residues long: C4-dicarboxylate transport protein (440 aa).

A run of 8 helical transmembrane segments spans residues 8–28 (LYLQ…LFPA), 40–60 (FIKL…VTGI), 74–94 (LKGL…GLVV), 147–167 (GDIL…AALK), 187–207 (IVGF…AFTV), 221–241 (LIAC…GLVL), 288–308 (VVGL…SIYL), and 354–374 (AATL…LLGV). Positions 419 to 440 (DEVEPANDPEPPAMAAGLGLHG) are disordered.

It belongs to the dicarboxylate/amino acid:cation symporter (DAACS) (TC 2.A.23) family.

The protein resides in the cell inner membrane. Functionally, responsible for the transport of dicarboxylates such as succinate, fumarate, and malate from the periplasm across the membrane. In Anaeromyxobacter dehalogenans (strain 2CP-C), this protein is C4-dicarboxylate transport protein.